A 512-amino-acid chain; its full sequence is Glutamate--tRNA ligase (512 aa).

A 'HIGH' region motif is present at residues 11-21 (PSPTGALHIGG). The short motif at 263–267 (KLSKR) is the 'KMSKS' region element. An ATP-binding site is contributed by Lys-266.

It belongs to the class-I aminoacyl-tRNA synthetase family. Glutamate--tRNA ligase type 1 subfamily. Monomer.

It is found in the cytoplasm. The enzyme catalyses tRNA(Glu) + L-glutamate + ATP = L-glutamyl-tRNA(Glu) + AMP + diphosphate. Functionally, catalyzes the attachment of glutamate to tRNA(Glu) in a two-step reaction: glutamate is first activated by ATP to form Glu-AMP and then transferred to the acceptor end of tRNA(Glu). This is Glutamate--tRNA ligase from Amoebophilus asiaticus (strain 5a2).